The primary structure comprises 284 residues: Tropomyosin (284 aa).

The stretch at 1–273 forms a coiled coil; that stretch reads MEAIKKKMQA…KEKYKSISDE (273 aa).

Belongs to the tropomyosin family. As to quaternary structure, homodimer. Ubiquitous, but especially prevalent in the anterior muscle bundles associated with legs. Expression in the mid and posterior regions is probably related to the numerous, small muscle bundles associated with the digestive and reproductive systems (at protein level).

Tropomyosin, in association with the troponin complex, plays a central role in the calcium dependent regulation of muscle contraction. The sequence is that of Tropomyosin from Psoroptes ovis (Sheep scab mite).